Reading from the N-terminus, the 224-residue chain is Putative gastrointestinal growth factor xP4 (224 aa).

The signal sequence occupies residues 1-17; it reads MANSVFWAIAVALVLGA. P-type domains follow at residues 25-68, 73-117, 123-167, and 173-216; these read YRCG…YTPW, TICN…YQPI, RDCS…FKPE, and LQCA…FYPD. 12 cysteine pairs are disulfide-bonded: Cys27–Cys53, Cys37–Cys52, Cys47–Cys64, Cys75–Cys102, Cys86–Cys101, Cys96–Cys113, Cys125–Cys152, Cys136–Cys151, Cys146–Cys163, Cys175–Cys201, Cys185–Cys200, and Cys195–Cys212. Asn104 carries an N-linked (GlcNAc...) asparagine glycan.

Glycosylated. As to expression, stomach mucosa.

It localises to the secreted. Its function is as follows. May act as a growth factor. The sequence is that of Putative gastrointestinal growth factor xP4 (p4) from Xenopus laevis (African clawed frog).